The sequence spans 342 residues: MSDLKTRFLEVYSVLKSELLNDPAFEFTDDSRQWVERMLDYNVPGGKLNRGLSVIDSYKLLKEGKELSDDEIFLSSALGWCIEWLQAYFLVLDDIMDSSHTRRGQPCWFRLPKVGMIAVNDGILLRNHIPRILKKHFRQKPYYVDLLDLFNEVEFQTASGQMIDLITTLVGEKDLSKYSLPIHRRIVQYKTAYYSFYLPVACALLMSGEDLEKHTNVKDILIEMGTYFQVQDDYLDCFGAPEVIGKIGTDIEDFKCSWLVVKALELSNEEQKKFLHENYGKDDPASVAKVKELYNTLKLQDVFAEYESKSYDKLIKFIEAHPSQAVQAVLKSFLGKIYKRQK.

Lys47, Arg50, and Gln86 together coordinate isopentenyl diphosphate. Residues Asp93 and Asp97 each contribute to the Mg(2+) site. Arg102 is a dimethylallyl diphosphate binding site. Isopentenyl diphosphate is bound at residue Arg103. Dimethylallyl diphosphate-binding residues include Lys190, Thr191, Gln229, Lys246, and Lys255.

The protein belongs to the FPP/GGPP synthase family. In terms of assembly, homodimer. Mg(2+) is required as a cofactor. Mostly expressed in roots and seeds, and to a lower extent, in leaves and stems.

Its subcellular location is the cytoplasm. It catalyses the reaction isopentenyl diphosphate + dimethylallyl diphosphate = (2E)-geranyl diphosphate + diphosphate. The catalysed reaction is isopentenyl diphosphate + (2E)-geranyl diphosphate = (2E,6E)-farnesyl diphosphate + diphosphate. The protein operates within isoprenoid biosynthesis; farnesyl diphosphate biosynthesis; farnesyl diphosphate from geranyl diphosphate and isopentenyl diphosphate: step 1/1. It participates in isoprenoid biosynthesis; geranyl diphosphate biosynthesis; geranyl diphosphate from dimethylallyl diphosphate and isopentenyl diphosphate: step 1/1. Its activity is regulated as follows. Stimulated by methyl jasmonate (MeJA). In terms of biological role, catalyzes the sequential condensation of isopentenyl pyrophosphate with the allylic pyrophosphates, dimethylallyl pyrophosphate, and then with the resultant geranylpyrophosphate to the ultimate product farnesyl pyrophosphate. Component of the triterpene saponins (e.g. ginsenosides or panaxosides) and phytosterols biosynthetic pathways. Promotes the accumulation of ginsenosides. In Panax ginseng (Korean ginseng), this protein is Farnesyl pyrophosphate synthase.